We begin with the raw amino-acid sequence, 1704 residues long: Arf-GAP with Rho-GAP domain, ANK repeat and PH domain-containing protein 2 (1704 aa).

The SAM domain maps to 6 to 70; sequence EVNVDIKDFL…LKQLQIILSK (65 aa). Tyr-77 bears the Phosphotyrosine mark. The tract at residues 126–161 is disordered; it reads NLEDSDASVERSQYPQSDDKLSPPKRDFPTAEEPHL. Residues 142 to 160 show a composition bias toward basic and acidic residues; it reads SDDKLSPPKRDFPTAEEPH. 2 PH domains span residues 482-574 and 587-679; these read KKVK…NALK and TPEK…QSIA. The region spanning 676–811 is the Arf-GAP domain; the sequence is QSIAETLSDY…TLLASLTKEE (136 aa). The C4-type zinc-finger motif lies at 700 to 723; sequence CADCKAPDPDWASINLCVVICKKC. PH domains follow at residues 878-1003 and 1014-1114; these read DIHS…KHFV and DYDL…AGTD. The Rho-GAP domain occupies 1116-1297; it reads NALQDQQLSK…DLINNYVEIF (182 aa). The region spanning 1326–1420 is the Ras-associating domain; sequence GDLLIEVYVE…AYLVVKRFLT (95 aa). Positions 1434–1537 constitute a PH 5 domain; that stretch reads GSIKEGILKI…WMTSIFIAQH (104 aa). Ser-1632 is subject to Phosphoserine. Residues 1636 to 1675 are disordered; the sequence is LEDTEPEAPLGQPKGHKGLKTLRKTEDRNSKATLDSDHKL. Residues 1658 to 1675 are compositionally biased toward basic and acidic residues; the sequence is RKTEDRNSKATLDSDHKL.

As to expression, detected in brain, thymus, lymph node, thyroid, spinal cord, trachea, heart, skeletal muscle, spleen, kidney, liver, placenta, lung and peripheral blood leukocytes.

It localises to the cytoplasm. Functionally, phosphatidylinositol 3,4,5-trisphosphate-dependent GTPase-activating protein that modulates actin cytoskeleton remodeling by regulating ARF and RHO family members. Is activated by phosphatidylinositol 3,4,5-trisphosphate (PtdIns(3,4,5)P3) binding. Can be activated by phosphatidylinositol 3,4-bisphosphate (PtdIns(3,4,5)P2) binding, albeit with lower efficiency. This is Arf-GAP with Rho-GAP domain, ANK repeat and PH domain-containing protein 2 (ARAP2) from Homo sapiens (Human).